The following is a 1161-amino-acid chain: Hamartin (1161 aa).

K30 participates in a covalent cross-link: Glycyl lysine isopeptide (Lys-Gly) (interchain with G-Cter in ubiquitin). 2 disordered regions span residues 296–336 (PYVD…PSTR) and 353–591 (CGMT…QRGV). Residues 303 to 336 (SYGGSTSTPSSSSRLMLFSPPGQLPQSLSSPSTR) are compositionally biased toward low complexity. Over residues 393-402 (TSPPPAPPCP) the composition is skewed to pro residues. A mediates interaction with WDR45B region spans residues 403-784 (QDDCVHGSAA…QIRQLQHDRE (382 aa)). Over residues 471-484 (EKDKEEAAISKELS) the composition is skewed to basic and acidic residues. S484, S502, S508, S518, S592, and S595 each carry phosphoserine. Polar residues predominate over residues 509–529 (LSGSQRKTHSAASGTQGSSVN). Coiled-coil stretches lie at residues 721-849 (IRAA…NRQL), 879-917 (TAYRKELEKNRSHLLQQNQRLDASQRRVLELESLLAKKD), and 967-991 (EKDGRLRKLEEDRAEAAEAAEERLD). Disordered regions lie at residues 1003–1077 (GHNE…SLPS) and 1092–1161 (NKSE…PEHS). The span at 1004–1017 (HNEEASGHNGETRT) shows a compositional bias: basic and acidic residues. Residues 1026-1043 (SCGGRVTGGSSSSSSELS) show a composition bias toward low complexity. Residues 1064 to 1077 (PSSSIPTTVGSLPS) are compositionally biased toward polar residues. Phosphoserine is present on S1094. Positions 1103–1113 (VTMSSSSLSET) are enriched in low complexity. Basic and acidic residues-rich tracts occupy residues 1114-1124 (LKTELGKDSGT) and 1152-1161 (DYNETHPEHS).

As to quaternary structure, component of the TSC-TBC complex (also named Rhebulator complex), composed of 2 molecules of TSC1, 2 molecules of TSC2 and 1 molecule of TBC1D7. Probably forms a complex composed of chaperones HSP90 and HSP70, co-chaperones STIP1/HOP, CDC37, PPP5C, PTGES3/p23, TSC1 and client protein TSC2. Forms a complex composed of chaperones HSP90 and HSP70, co-chaperones CDC37, PPP5C, TSC1 and client protein TSC2, CDK4, AKT, RAF1 and NR3C1; this complex does not contain co-chaperones STIP1/HOP and PTGES3/p23. Forms a complex containing HSP90AA1, TSC1 and TSC2; TSC1 is required to recruit TCS2 to the complex. Interacts (via C-terminus) with the closed form of HSP90AA1 (via the middle domain and TPR repeat-binding motif). Interacts with DOCK7. Interacts with FBXW5. Interacts with WDR45B. Interacts with RPAP3 and URI1. Phosphorylation at Ser-502 does not affect interaction with TSC2. Post-translationally, 'Lys-63'-linked ubiquitinated at Lys-30 by PELI1; the ubiquitination promotes TSC1/TSC2 complex stability.

Its subcellular location is the lysosome membrane. The protein resides in the cytoplasm. It localises to the cytosol. In terms of biological role, non-catalytic component of the TSC-TBC complex, a multiprotein complex that acts as a negative regulator of the canonical mTORC1 complex, an evolutionarily conserved central nutrient sensor that stimulates anabolic reactions and macromolecule biosynthesis to promote cellular biomass generation and growth. The TSC-TBC complex acts as a GTPase-activating protein (GAP) for the small GTPase RHEB, a direct activator of the protein kinase activity of mTORC1. In absence of nutrients, the TSC-TBC complex inhibits mTORC1, thereby preventing phosphorylation of ribosomal protein S6 kinase (RPS6KB1 and RPS6KB2) and EIF4EBP1 (4E-BP1) by the mTORC1 signaling. The TSC-TBC complex is inactivated in response to nutrients, relieving inhibition of mTORC1. Within the TSC-TBC complex, TSC1 stabilizes TSC2 and prevents TSC2 self-aggregation. Involved in microtubule-mediated protein transport via its ability to regulate mTORC1 signaling. Also acts as a co-chaperone for HSP90AA1 facilitating HSP90AA1 chaperoning of protein clients such as kinases, TSC2 and glucocorticoid receptor NR3C1. Increases ATP binding to HSP90AA1 and inhibits HSP90AA1 ATPase activity. Competes with the activating co-chaperone AHSA1 for binding to HSP90AA1, thereby providing a reciprocal regulatory mechanism for chaperoning of client proteins. Recruits TSC2 to HSP90AA1 and stabilizes TSC2 by preventing the interaction between TSC2 and ubiquitin ligase HERC1. The chain is Hamartin from Mus musculus (Mouse).